The chain runs to 422 residues: Lactose-binding protein (422 aa).

Residues 1-28 form the signal peptide; the sequence is MDYSRLLKRSVSAALTAAALLCSTAAFA. The lactose-binding stretch occupies residues 246–277; the sequence is SNDGIRALTSGDVASVLRGVWITGTVKSQPDQ.

It belongs to the bacterial solute-binding protein 1 family.

Its subcellular location is the periplasm. Part of the binding-protein-dependent transport system for lactose. This chain is Lactose-binding protein (lacE), found in Rhizobium radiobacter (Agrobacterium tumefaciens).